The following is a 368-amino-acid chain: Glutaminyl-peptide cyclotransferase (368 aa).

The first 23 residues, 1–23, serve as a signal peptide directing secretion; it reads MAGERRDSKAAAFFCLAWALCLA. N-linked (GlcNAc...) asparagine glycosylation occurs at asparagine 53. Cysteine 143 and cysteine 169 are oxidised to a cystine. A Zn(2+)-binding site is contributed by aspartate 164. Glutamate 207 functions as the Proton acceptor in the catalytic mechanism. Glutamate 208 lines the Zn(2+) pocket. Aspartate 254 functions as the Proton acceptor in the catalytic mechanism. N-linked (GlcNAc...) asparagine glycosylation occurs at asparagine 292. A Zn(2+)-binding site is contributed by histidine 336. Asparagine 352 carries N-linked (GlcNAc...) asparagine glycosylation.

This sequence belongs to the glutaminyl-peptide cyclotransferase family. Expressed by the venom gland.

The protein resides in the secreted. It carries out the reaction N-terminal L-glutaminyl-[peptide] = N-terminal 5-oxo-L-prolyl-[peptide] + NH4(+). Its function is as follows. Responsible for the biosynthesis of pyroglutamyl peptides. Has a bias against acidic and tryptophan residues adjacent to the N-terminal glutaminyl residue and a lack of importance of chain length after the second residue. Also catalyzes N-terminal pyroglutamate formation. The polypeptide is Glutaminyl-peptide cyclotransferase (QPCT) (Boiga dendrophila (Mangrove snake)).